We begin with the raw amino-acid sequence, 135 residues long: Galectin-1 (135 aa).

The residue at position 2 (A2) is an N-acetylalanine. The region spanning 4–135 (GLVASNLNLK…DFKIKCVAFE (132 aa)) is the Galectin domain. K13 and K29 each carry N6-acetyllysine. The residue at position 30 (S30) is a Phosphoserine. A beta-D-galactoside is bound by residues 45–49 (HFNPR), H53, N62, and 69–72 (WGAE). K108 is modified (N6-acetyllysine; alternate). K108 carries the N6-succinyllysine; alternate modification. K128 carries the post-translational modification N6-acetyllysine.

In terms of assembly, homodimer. Binds LGALS3BP. Interacts with CD2, CD3, CD4, CD6, CD7, CD43, ALCAM and CD45. Interacts with laminin (via poly-N-acetyllactosamine). Interacts with SUSD2. Interacts with cargo receptor TMED10; the interaction mediates the translocation from the cytoplasm into the ERGIC (endoplasmic reticulum-Golgi intermediate compartment) and thereby secretion.

Its subcellular location is the secreted. It localises to the extracellular space. The protein resides in the extracellular matrix. It is found in the cytoplasm. In terms of biological role, lectin that binds beta-galactoside and a wide array of complex carbohydrates. Plays a role in regulating apoptosis, cell proliferation and cell differentiation. Inhibits CD45 protein phosphatase activity and therefore the dephosphorylation of Lyn kinase. Strong inducer of T-cell apoptosis. The polypeptide is Galectin-1 (LGALS1) (Ovis aries (Sheep)).